A 142-amino-acid polypeptide reads, in one-letter code: Large ribosomal subunit protein uL11 (142 aa).

The protein belongs to the universal ribosomal protein uL11 family. As to quaternary structure, part of the ribosomal stalk of the 50S ribosomal subunit. Interacts with L10 and the large rRNA to form the base of the stalk. L10 forms an elongated spine to which L12 dimers bind in a sequential fashion forming a multimeric L10(L12)X complex. In terms of processing, one or more lysine residues are methylated.

Functionally, forms part of the ribosomal stalk which helps the ribosome interact with GTP-bound translation factors. The sequence is that of Large ribosomal subunit protein uL11 from Liberibacter asiaticus (Citrus greening disease).